We begin with the raw amino-acid sequence, 212 residues long: Large ribosomal subunit protein uL3 (212 aa).

Residue glutamine 153 is modified to N5-methylglutamine.

Belongs to the universal ribosomal protein uL3 family. Part of the 50S ribosomal subunit. Forms a cluster with proteins L14 and L19. In terms of processing, methylated by PrmB.

Functionally, one of the primary rRNA binding proteins, it binds directly near the 3'-end of the 23S rRNA, where it nucleates assembly of the 50S subunit. The sequence is that of Large ribosomal subunit protein uL3 from Marinobacter nauticus (strain ATCC 700491 / DSM 11845 / VT8) (Marinobacter aquaeolei).